The sequence spans 347 residues: Spermidine/putrescine import ATP-binding protein PotA (347 aa).

Residues leucine 6–isoleucine 238 enclose the ABC transporter domain. Position 40 to 47 (glycine 40 to threonine 47) interacts with ATP.

Belongs to the ABC transporter superfamily. Spermidine/putrescine importer (TC 3.A.1.11.1) family. As to quaternary structure, the complex is composed of two ATP-binding proteins (PotA), two transmembrane proteins (PotB and PotC) and a solute-binding protein (PotD).

The protein resides in the cell inner membrane. It catalyses the reaction ATP + H2O + polyamine-[polyamine-binding protein]Side 1 = ADP + phosphate + polyamineSide 2 + [polyamine-binding protein]Side 1.. Part of the ABC transporter complex PotABCD involved in spermidine/putrescine import. Responsible for energy coupling to the transport system. The protein is Spermidine/putrescine import ATP-binding protein PotA of Borrelia garinii subsp. bavariensis (strain ATCC BAA-2496 / DSM 23469 / PBi) (Borreliella bavariensis).